Here is a 124-residue protein sequence, read N- to C-terminus: MALTQEDIINAVAEMSVMEVAELISAMEEKFGVSAAAAVVAGPGAGGEGEAAEEQTEFDLVLTGAGDKKVNVIKVVREITGLGLKEAKGAVDGVPATLKEGMSKEDAEAAKTKLEEAGASVELK.

The span at 102–116 shows a compositional bias: basic and acidic residues; that stretch reads MSKEDAEAAKTKLEE. A disordered region spans residues 102–124; it reads MSKEDAEAAKTKLEEAGASVELK.

It belongs to the bacterial ribosomal protein bL12 family. As to quaternary structure, homodimer. Part of the ribosomal stalk of the 50S ribosomal subunit. Forms a multimeric L10(L12)X complex, where L10 forms an elongated spine to which 2 to 4 L12 dimers bind in a sequential fashion. Binds GTP-bound translation factors.

Forms part of the ribosomal stalk which helps the ribosome interact with GTP-bound translation factors. Is thus essential for accurate translation. This chain is Large ribosomal subunit protein bL12, found in Chromohalobacter salexigens (strain ATCC BAA-138 / DSM 3043 / CIP 106854 / NCIMB 13768 / 1H11).